The primary structure comprises 358 residues: Fructose-bisphosphate aldolase 5, cytosolic (358 aa).

S2 is modified (N-acetylserine). R39 contributes to the substrate binding site. The residue at position 68 (C68) is an S-glutathionyl cysteine; transient. The residue at position 173 (C173) is an S-glutathionyl cysteine; transient; alternate. Position 173 is an S-nitrosocysteine; transient; alternate (C173). The Proton acceptor role is filled by E183. K225 serves as the catalytic Schiff-base intermediate with dihydroxyacetone-P. Substrate-binding positions include 266–268 (SGG) and R298. Position 350 is a phosphoserine (S350).

Belongs to the class I fructose-bisphosphate aldolase family. Homotetramer. Interacts with TRX3. Post-translationally, S-glutathionylated at Cys-68 and Cys-173. In terms of processing, S-nitrosylated at Cys-173. In terms of tissue distribution, expressed in rosette leaves and cauline leaves.

Its subcellular location is the cytoplasm. The protein localises to the cytosol. The enzyme catalyses beta-D-fructose 1,6-bisphosphate = D-glyceraldehyde 3-phosphate + dihydroxyacetone phosphate. It participates in carbohydrate degradation; glycolysis; D-glyceraldehyde 3-phosphate and glycerone phosphate from D-glucose: step 4/4. In terms of biological role, fructose-bisphosphate aldolase that plays a key role in glycolysis and gluconeogenesis. In Arabidopsis thaliana (Mouse-ear cress), this protein is Fructose-bisphosphate aldolase 5, cytosolic.